Reading from the N-terminus, the 478-residue chain is NADH oxidase (478 aa).

Residues G8–A12, D33, C43, V80, A111–A114, K149, and Y177 each bind FAD. Residue H11 is the Proton acceptor of the active site. C43 acts as the Redox-active in catalysis. The residue at position 43 (C43) is a Cysteine sulfinic acid (-SO2H). NAD(+) contacts are provided by residues V170–A185, D197, and G264. FAD contacts are provided by residues L295–G305, L322, A323, and T324. A353 contributes to the NAD(+) binding site. An FAD-binding site is contributed by F450.

The protein belongs to the class-III pyridine nucleotide-disulfide oxidoreductase family. Requires FAD as cofactor.

It carries out the reaction 2 NADH + O2 + 2 H(+) = 2 NAD(+) + 2 H2O. Its function is as follows. Catalyzes the four-electron reduction of molecular oxygen to water. This chain is NADH oxidase (nox), found in Mycoplasma genitalium (strain ATCC 33530 / DSM 19775 / NCTC 10195 / G37) (Mycoplasmoides genitalium).